The sequence spans 520 residues: Tubby-related protein 2 (520 aa).

Phosphoserine is present on residues Ser-135 and Ser-190. The segment at 141-236 is disordered; that stretch reads EVSVENGSVS…GTNSSAAHNE (96 aa). A compositionally biased stretch (basic and acidic residues) spans 211-223; that stretch reads QKEEDLEKKREAS. Polar residues predominate over residues 224–233; that stretch reads ESTGTNSSAA.

This sequence belongs to the TUB family. Strongly expressed in testis. Also expressed in retina. Expressed in cancer cell lines.

Its subcellular location is the cytoplasm. It is found in the secreted. This is Tubby-related protein 2 (TULP2) from Homo sapiens (Human).